The sequence spans 729 residues: Phosphoribosylformylglycinamidine synthase subunit PurL (729 aa).

The active site involves H54. 2 residues coordinate ATP: Y57 and K96. E98 serves as a coordination point for Mg(2+). Residues 99–102 and R121 contribute to the substrate site; that span reads SHNH. The active-site Proton acceptor is H100. D122 serves as a coordination point for Mg(2+). Q245 serves as a coordination point for substrate. Mg(2+) is bound at residue D273. 317 to 319 lines the substrate pocket; it reads ETQ. 2 residues coordinate ATP: D495 and G532. Position 533 (N533) interacts with Mg(2+). Position 535 (S535) interacts with substrate.

Belongs to the FGAMS family. Monomer. Part of the FGAM synthase complex composed of 1 PurL, 1 PurQ and 2 PurS subunits.

The protein resides in the cytoplasm. The enzyme catalyses N(2)-formyl-N(1)-(5-phospho-beta-D-ribosyl)glycinamide + L-glutamine + ATP + H2O = 2-formamido-N(1)-(5-O-phospho-beta-D-ribosyl)acetamidine + L-glutamate + ADP + phosphate + H(+). Its pathway is purine metabolism; IMP biosynthesis via de novo pathway; 5-amino-1-(5-phospho-D-ribosyl)imidazole from N(2)-formyl-N(1)-(5-phospho-D-ribosyl)glycinamide: step 1/2. Functionally, part of the phosphoribosylformylglycinamidine synthase complex involved in the purines biosynthetic pathway. Catalyzes the ATP-dependent conversion of formylglycinamide ribonucleotide (FGAR) and glutamine to yield formylglycinamidine ribonucleotide (FGAM) and glutamate. The FGAM synthase complex is composed of three subunits. PurQ produces an ammonia molecule by converting glutamine to glutamate. PurL transfers the ammonia molecule to FGAR to form FGAM in an ATP-dependent manner. PurS interacts with PurQ and PurL and is thought to assist in the transfer of the ammonia molecule from PurQ to PurL. In Staphylococcus aureus (strain bovine RF122 / ET3-1), this protein is Phosphoribosylformylglycinamidine synthase subunit PurL.